The primary structure comprises 406 residues: MNGVEGNNELSLANTTTPSHASEDLDLKQDQGLQEETDTVREMEAAGEAGADGGASPDSEHCGPELCFRVAENSCAAAARGLEDAPSPSKGGDAPSAPVAADDSSKNGCQLEGPHSPAKPKALEACGAVGLGSQQMPGPKKTKEMTTTKCAISVATGKEGEAGAAMQEKKGLQKEKKVAGGGKEETRPRAPKINCMDSLEAIDQELSNVNAQADRAFLQLERKFGRMRRLHMQRRSFIIQNIPGFWVTAFRNHPQLSPMISGQDEDMMRYMINLEVEELKQPRVGCKFKFIFQSNPYFRNEGLVKEYERRSSGRVVSLSTPIRWHRGQEPQAHIHRNREGNTIPSFFNWFSDHSLLEFDRIAEIIKGELWSNPLQYYLMGDGPRRGVRVPPRQPVESPRSFRFQSG.

4 disordered regions span residues 1–63, 81–121, 161–189, and 387–406; these read MNGV…EHCG, GLED…AKPK, EAGA…TRPR, and VRVP…FQSG. The segment covering 8–20 has biased composition (polar residues); it reads NELSLANTTTPSH. A compositionally biased stretch (low complexity) spans 93-102; the sequence is DAPSAPVAAD. A compositionally biased stretch (basic and acidic residues) spans 167–188; that stretch reads QEKKGLQKEKKVAGGGKEETRP.

It belongs to the nucleosome assembly protein (NAP) family.

This chain is Testis-specific Y-encoded-like protein 4 (Tspyl4), found in Mus musculus (Mouse).